A 129-amino-acid chain; its full sequence is uncharacterized protein (129 aa).

The first 17 residues, 1 to 17 (MCPECFFLMLFFCGYRA), serve as a signal peptide directing secretion. The segment covering 26 to 36 (SSSSSSSFRSS) has biased composition (low complexity). Residues 26 to 76 (SSSSSSSFRSSPAYGFSGRPPGGAGCRERSQRSCLRPGGLPSLTRNPGLQR) form a disordered region.

This is an uncharacterized protein from Escherichia coli O157:H7.